The primary structure comprises 318 residues: C1GALT1-specific chaperone 1 (318 aa).

At 1–6 the chain is on the cytoplasmic side; that stretch reads MLSESS. The helical; Signal-anchor for type II membrane protein transmembrane segment at 7–26 threads the bilayer; that stretch reads SFLKGVMLGSIFCALITMLG. The Lumenal portion of the chain corresponds to 27-318; that stretch reads HIRIGHGNRM…FLPPNGSDND (292 aa).

The protein belongs to the glycosyltransferase 31 family. Beta3-Gal-T subfamily. In terms of assembly, associates with core 1 beta-3-galactosyltransferase (C1GALT1), probably not with the soluble active form. In terms of tissue distribution, ubiquitously expressed. Abundantly expressed in salivary gland, stomach, small intestine, kidney, and testis and at intermediate levels in whole brain, cerebellum, spinal cord, thymus, spleen, trachea, lung, pancreas, ovary, and uterus.

It is found in the membrane. Its function is as follows. Probable chaperone required for the generation of 1 O-glycan Gal-beta1-3GalNAc-alpha1-Ser/Thr (T antigen), which is a precursor for many extended O-glycans in glycoproteins. Probably acts as a specific molecular chaperone assisting the folding/stability of core 1 beta-3-galactosyltransferase (C1GALT1). This is C1GALT1-specific chaperone 1 (C1GALT1C1) from Homo sapiens (Human).